We begin with the raw amino-acid sequence, 190 residues long: Segregation and condensation protein B (190 aa).

This sequence belongs to the ScpB family. In terms of assembly, homodimer. Homodimerization may be required to stabilize the binding of ScpA to the Smc head domains. Component of a cohesin-like complex composed of ScpA, ScpB and the Smc homodimer, in which ScpA and ScpB bind to the head domain of Smc. The presence of the three proteins is required for the association of the complex with DNA.

It localises to the cytoplasm. Functionally, participates in chromosomal partition during cell division. May act via the formation of a condensin-like complex containing Smc and ScpA that pull DNA away from mid-cell into both cell halves. The protein is Segregation and condensation protein B of Bacillus cereus (strain ZK / E33L).